Consider the following 235-residue polypeptide: Exosome complex component Rrp4 (235 aa).

The S1 motif domain occupies 63–137 (GDLVIGYVTD…DEYPIILTLK (75 aa)). The KH domain maps to 147–203 (GTVVEITPVKVPRVIGKRGSMLNTLMELGCDIVVGQNGRIWVKCKDPRDEVFLASLI).

It belongs to the RRP4 family. As to quaternary structure, component of the archaeal exosome complex. Forms a trimer of Rrp4 and/or Csl4 subunits. The trimer associates with a hexameric ring-like arrangement composed of 3 Rrp41-Rrp42 heterodimers.

The protein localises to the cytoplasm. Non-catalytic component of the exosome, which is a complex involved in RNA degradation. Increases the RNA binding and the efficiency of RNA degradation. Confers strong poly(A) specificity to the exosome. In Pyrobaculum aerophilum (strain ATCC 51768 / DSM 7523 / JCM 9630 / CIP 104966 / NBRC 100827 / IM2), this protein is Exosome complex component Rrp4.